We begin with the raw amino-acid sequence, 134 residues long: Transcription antitermination protein NusB (134 aa).

It belongs to the NusB family.

In terms of biological role, involved in transcription antitermination. Required for transcription of ribosomal RNA (rRNA) genes. Binds specifically to the boxA antiterminator sequence of the ribosomal RNA (rrn) operons. The protein is Transcription antitermination protein NusB of Shewanella oneidensis (strain ATCC 700550 / JCM 31522 / CIP 106686 / LMG 19005 / NCIMB 14063 / MR-1).